We begin with the raw amino-acid sequence, 393 residues long: RNA pseudouridine synthase 7 (393 aa).

One can recognise an S4 RNA-binding domain in the interval 49-118 (KTIVDLFTDE…GDITILQNEA (70 aa)). Asp162 is an active-site residue.

The protein belongs to the pseudouridine synthase RluA family.

It catalyses the reaction a uridine in RNA = a pseudouridine in RNA. This Oryza sativa subsp. japonica (Rice) protein is RNA pseudouridine synthase 7.